The sequence spans 519 residues: Laccase-2 (519 aa).

The signal sequence occupies residues 1 to 20 (MGLQRFSFFVTLALVARSLA). Plastocyanin-like domains are found at residues 22–147 (IGPV…FVVY) and 159–301 (VDNE…ILRY). Asn-74 is a glycosylation site (N-linked (GlcNAc...) asparagine). Positions 84, 86, 129, and 131 each coordinate Cu cation. Cystine bridges form between Cys-105–Cys-508 and Cys-137–Cys-225. 6 N-linked (GlcNAc...) asparagine glycosylation sites follow: Asn-161, Asn-228, Asn-237, Asn-271, Asn-353, and Asn-361. The 123-residue stretch at 368-490 (TVPVLLQILS…AGFAIVFAED (123 aa)) folds into the Plastocyanin-like 3 domain. Cu cation-binding residues include His-415, His-418, and His-420. N-linked (GlcNAc...) asparagine glycosylation is present at Asn-456. 4 residues coordinate Cu cation: His-472, Cys-473, His-474, and His-478.

Belongs to the multicopper oxidase family. Cu cation is required as a cofactor.

It localises to the secreted. It carries out the reaction 4 hydroquinone + O2 = 4 benzosemiquinone + 2 H2O. Lignin degradation and detoxification of lignin-derived products. In Trametes versicolor (White-rot fungus), this protein is Laccase-2 (LCC2).